The chain runs to 667 residues: Protein angel homolog 1 (667 aa).

2 positions are modified to phosphoserine: S77 and S105.

This sequence belongs to the CCR4/nocturin family.

The sequence is that of Protein angel homolog 1 from Mus musculus (Mouse).